A 186-amino-acid chain; its full sequence is Ribosome-recycling factor (186 aa).

Belongs to the RRF family.

It localises to the cytoplasm. Its function is as follows. Responsible for the release of ribosomes from messenger RNA at the termination of protein biosynthesis. May increase the efficiency of translation by recycling ribosomes from one round of translation to another. The sequence is that of Ribosome-recycling factor from Chlorobaculum parvum (strain DSM 263 / NCIMB 8327) (Chlorobium vibrioforme subsp. thiosulfatophilum).